Consider the following 272-residue polypeptide: AA9 family lytic polysaccharide monooxygenase G (272 aa).

The first 22 residues, 1–22 (MKGAGSASFLLTLLSTITRTSA), serve as a signal peptide directing secretion. Histidine 23 is a binding site for Cu(2+). Residue asparagine 60 is glycosylated (N-linked (GlcNAc...) asparagine). 2 cysteine pairs are disulfide-bonded: cysteine 78–cysteine 202 and cysteine 121–cysteine 125. Histidine 110 contributes to the Cu(2+) binding site. O2-binding residues include histidine 188 and glutamine 197. Tyrosine 199 lines the Cu(2+) pocket.

It belongs to the polysaccharide monooxygenase AA9 family. Cu(2+) is required as a cofactor.

It localises to the secreted. It catalyses the reaction [(1-&gt;4)-beta-D-glucosyl]n+m + reduced acceptor + O2 = 4-dehydro-beta-D-glucosyl-[(1-&gt;4)-beta-D-glucosyl]n-1 + [(1-&gt;4)-beta-D-glucosyl]m + acceptor + H2O.. In terms of biological role, lytic polysaccharide monooxygenase (LPMO) that depolymerizes crystalline and amorphous polysaccharides via the oxidation of scissile alpha- or beta-(1-4)-glycosidic bonds, yielding C1 or C4 oxidation products. Catalysis by LPMOs requires the reduction of the active-site copper from Cu(II) to Cu(I) by a reducing agent and H(2)O(2) or O(2) as a cosubstrate. Acts preferentially on crystalline regions of cellulose such as highly crystalline algae cellulose. In Emericella nidulans (strain FGSC A4 / ATCC 38163 / CBS 112.46 / NRRL 194 / M139) (Aspergillus nidulans), this protein is AA9 family lytic polysaccharide monooxygenase G.